The primary structure comprises 32 residues: Snaclec (32 aa).

Dimer; disulfide-linked. As to expression, expressed by the venom gland.

It localises to the secreted. In terms of biological role, interferes with one step of hemostasis (modulation of platelet aggregation, or coagulation cascade, for example). In Bothrops diporus (Chaco lancehead), this protein is Snaclec.